Consider the following 374-residue polypeptide: Probable dual-specificity RNA methyltransferase RlmN (374 aa).

Glu108 serves as the catalytic Proton acceptor. The 248-residue stretch at 114–361 (YSDRNTVCIS…SCTVRDTRGR (248 aa)) folds into the Radical SAM core domain. A disulfide bridge links Cys121 with Cys367. Residues Cys128, Cys132, and Cys135 each coordinate [4Fe-4S] cluster. S-adenosyl-L-methionine is bound by residues 188-189 (GE), Ser222, 245-247 (SLH), and Asn324. Cys367 (S-methylcysteine intermediate) is an active-site residue.

Belongs to the radical SAM superfamily. RlmN family. Requires [4Fe-4S] cluster as cofactor.

Its subcellular location is the cytoplasm. The enzyme catalyses adenosine(2503) in 23S rRNA + 2 reduced [2Fe-2S]-[ferredoxin] + 2 S-adenosyl-L-methionine = 2-methyladenosine(2503) in 23S rRNA + 5'-deoxyadenosine + L-methionine + 2 oxidized [2Fe-2S]-[ferredoxin] + S-adenosyl-L-homocysteine. It carries out the reaction adenosine(37) in tRNA + 2 reduced [2Fe-2S]-[ferredoxin] + 2 S-adenosyl-L-methionine = 2-methyladenosine(37) in tRNA + 5'-deoxyadenosine + L-methionine + 2 oxidized [2Fe-2S]-[ferredoxin] + S-adenosyl-L-homocysteine. Its function is as follows. Specifically methylates position 2 of adenine 2503 in 23S rRNA and position 2 of adenine 37 in tRNAs. This is Probable dual-specificity RNA methyltransferase RlmN from Mycobacterium sp. (strain JLS).